Here is a 430-residue protein sequence, read N- to C-terminus: Tapasin (430 aa).

Positions 1 to 15 (MAAGLRLLLAGLCWS) are cleaved as a signal peptide. Residues 16–399 (QFRVEDAASP…TEGPHLEDIT (384 aa)) lie on the Lumenal side of the membrane. Residues cysteine 34 and cysteine 99 are joined by a disulfide bond. A disordered region spans residues 61–128 (GDAETPPEPG…PDARSPPTAG (68 aa)). N-linked (GlcNAc...) asparagine glycosylation is present at asparagine 78. The segment covering 101–111 (LNPTNPQTGSD) has biased composition (polar residues). 2 consecutive Ig-like C1-type domains span residues 139–273 (PQYG…LQLH) and 278–382 (PKVT…MRVS). Cysteine 299 and cysteine 368 form a disulfide bridge. The segment at 316–342 (RAGGSGTSQSPRDTVMDSWTSGHRQAA) is disordered. Residues 322–338 (TSQSPRDTVMDSWTSGH) show a composition bias toward polar residues. A helical membrane pass occupies residues 400–417 (GLFLVAFVLCGLIRWLYP). The Cytoplasmic segment spans residues 418 to 430 (KAARPKEETKKSQ).

In terms of assembly, interacts with TAP1 and is thus a subunit of the TAP complex. Interaction with TAP1 is TAP2 independent and is required for efficient peptide-TAP interaction. Obligatory mediator for the interaction between newly assembled MHC class I molecules, calreticulin, ERp57 and TAP. Up to 4 MHC class I/tapasin complexes bind to 1 TAP.

The protein resides in the endoplasmic reticulum membrane. In terms of biological role, involved in the association of MHC class I with transporter associated with antigen processing (TAP) and in the assembly of MHC class I with peptide (peptide loading). The chain is Tapasin (TAPBP) from Gallus gallus (Chicken).